Reading from the N-terminus, the 1065-residue chain is Leucine-rich repeats and immunoglobulin-like domains protein 2 (1065 aa).

A signal peptide spans 1-40; it reads MAPAPLGVPEEQLLGCRSRVLSRLLFIAQTALLLLPAAGA. One can recognise an LRRNT domain in the interval 41–75; the sequence is GLCPAPCSCRIPLLDCSRRKLPAPSWRALSGLLPP. Residues 41-807 are Extracellular-facing; that stretch reads GLCPAPCSCR…HEDDGWTTVG (767 aa). LRR repeat units lie at residues 76–97, 98–119, 121–142, 145–166, 168–189, 193–214, 216–237, 240–261, 264–285, 288–309, 312–333, 336–357, 360–382, 387–408, and 411–432; these read DTAI…LESQ, TLQE…GEPT, NITL…ALQF, ALES…SFPR, QLKY…CFDN, SLLV…IFKL, HLQF…TFQG, SLRS…AFFG, NMEE…WLYG, MLQQ…AWEF, RLSE…AFVG, LLER…VFRF, NLQT…SEAF, SLTK…AFIG, and SLEH…AFSQ. A glycan (N-linked (GlcNAc...) asparagine) is linked at Asn91. A glycan (N-linked (GlcNAc...) asparagine) is linked at Asn121. 2 N-linked (GlcNAc...) asparagine glycosylation sites follow: Asn173 and Asn189. Residue Asn274 is glycosylated (N-linked (GlcNAc...) asparagine). Asn441, Asn468, Asn514, Asn571, and Asn589 each carry an N-linked (GlcNAc...) asparagine glycan. One can recognise an LRRCT domain in the interval 443-494; the sequence is SSLLCDCHLKWLLQWLVDNNFQHSVNVSCAHPEWLAGQSILNVDLKDFVCDD. Ig-like C2-type domains are found at residues 498 to 597, 602 to 691, and 696 to 785; these read PQIR…AKLT, PSFL…ASLT, and PSFI…NVIS. Cys519 and Cys580 are oxidised to a cystine. A disulfide bridge connects residues Cys623 and Cys675. Asn687 and Asn728 each carry an N-linked (GlcNAc...) asparagine glycan. The cysteines at positions 717 and 766 are disulfide-linked. A helical transmembrane segment spans residues 808–828; that stretch reads IVIIVVVCCVVGTSLIWVIVI. At 829 to 1065 the chain is on the cytoplasmic side; it reads YHMRRKNEDY…RNIQDGSEGT (237 aa). Tyr906 carries the post-translational modification Phosphotyrosine. Disordered regions lie at residues 963-990 and 1003-1040; these read SANR…QMSG and ELGL…ASSM. Over residues 974-983 the composition is skewed to basic and acidic residues; that stretch reads NHERISEKKL. A compositionally biased stretch (polar residues) spans 1013–1024; it reads QQPVHESPQLHQ.

Detected in all tissues analyzed.

The protein resides in the cell membrane. The protein localises to the cytoplasm. The chain is Leucine-rich repeats and immunoglobulin-like domains protein 2 (LRIG2) from Homo sapiens (Human).